Here is a 1043-residue protein sequence, read N- to C-terminus: MPLLEGPVGVEDLILLEPLDEESLIKNLQLRYENKEIYTYIGNVVISMNPYEQLPIYGPEFIAKYRDYTFYELKPHIYALANVAYQSLKDRDRDQCILITGESGAGKTEASKLVMSYVAAVCGKGEQVNSVKEQLLQSNPVLEAFGNAKTIRNNNSSRFGKYMDIEFDFKGSPLGGVITNYLLEKSRVVKQLKGERNFHIFYQLLAGADAQLLKALKLEEDTSVYGYLNGEVSKVNGMDDASNFRAVQHAMSVIGFSEEEIRQVLEVTALVLKLGNVKLTDEFQANGIPASGICDGKGIQEIGEMMGLNSTELERALCSRTMETGKEKVVTVLNVTQAQYARDALAKNIYSRLFDWIVKRINESIKVGTGEKKKVMGVLDIYGFEILEDNSFEQFVINYCNERLQQVFIELTLKEEQEEYKREGIPWTKVEYFDNGIICNLIEHSQRGILAMLDEECLRPGVVSDSTFLAKLNQLFSKHSHYESKVSQNAQRQYDRTMGLSCFRISHYAGKVTYNVTGFIDKNNDLLFRDLSQTMWKAQHPLLKSLFPEGNPKEASLKRPPTAGTQFKNSVAVLMKNLYSKNPNYIRCIKPNDQQQKGRFTSEMVMVQARYLGLLENVRVRRAGYAFRQGYKPFLERYRLLSRSTWPRWNGDDREGVEKVLGSLTLSSEELAYGKTKIFIRSPKTLFYLEEQRRLRLQQLATLIQKVYRGWRCRTHYQQMRKSQILISAWFRGNKQKKHYGKIRSSVLLIQAFVRGWRARKNYRKYFRSGAALTLANFIYQSMAQKFLLNLKKNLPSTKVLDNTWPAAPYRCFNTANQELQRLFYQWKCKKFRDQLSPKQVQTLREKLCASELFKGKKASYPQSVPIPFRGDYIGLQGNPKLQRLKGREEGPVLVADTVKKVNRGNGKTSARILLLTKGHVILTDAKKSQAQIVIGLEDVAGVSVSSLQDGLFSLHLSEMSSAVSKGDILLVSDHVVELLTKMYQAVLDATQRQLSVTVTEKFSVRFKEGSVAVKVIQGPEGGGNRKLICKKKGSNAMEVTVR.

The region spanning valine 8–arginine 694 is the Myosin motor domain. Glycine 101–threonine 108 is a binding site for ATP. Positions valine 571 to aspartate 593 are actin-binding. 3 consecutive IQ domains span residues leucine 697–glutamine 719, methionine 720–lysine 742, and isoleucine 743–alanine 772. In terms of domain architecture, TH1 spans lysine 858–valine 1042.

This sequence belongs to the TRAFAC class myosin-kinesin ATPase superfamily. Myosin family. Post-translationally, phosphorylated by ALPK1.

Its function is as follows. Involved in directing the movement of organelles along actin filaments. The protein is Unconventional myosin-Ia (Myo1a) of Mus musculus (Mouse).